Reading from the N-terminus, the 333-residue chain is Ribosomal RNA small subunit methyltransferase H (333 aa).

S-adenosyl-L-methionine contacts are provided by residues 39–41, Asp57, Phe84, Asp101, and Gln108; that span reads GGY.

Belongs to the methyltransferase superfamily. RsmH family.

The protein resides in the cytoplasm. It carries out the reaction cytidine(1402) in 16S rRNA + S-adenosyl-L-methionine = N(4)-methylcytidine(1402) in 16S rRNA + S-adenosyl-L-homocysteine + H(+). In terms of biological role, specifically methylates the N4 position of cytidine in position 1402 (C1402) of 16S rRNA. The sequence is that of Ribosomal RNA small subunit methyltransferase H from Dinoroseobacter shibae (strain DSM 16493 / NCIMB 14021 / DFL 12).